The sequence spans 198 residues: Dephospho-CoA kinase (198 aa).

The region spanning 3 to 198 is the DPCK domain; sequence IVGITGGIGS…LLAKERLELA (196 aa). ATP is bound at residue 11–16; the sequence is GSGKTT.

Belongs to the CoaE family.

Its subcellular location is the cytoplasm. It carries out the reaction 3'-dephospho-CoA + ATP = ADP + CoA + H(+). Its pathway is cofactor biosynthesis; coenzyme A biosynthesis; CoA from (R)-pantothenate: step 5/5. Its function is as follows. Catalyzes the phosphorylation of the 3'-hydroxyl group of dephosphocoenzyme A to form coenzyme A. This is Dephospho-CoA kinase from Dehalococcoides mccartyi (strain ATCC BAA-2266 / KCTC 15142 / 195) (Dehalococcoides ethenogenes (strain 195)).